Reading from the N-terminus, the 187-residue chain is GTP cyclohydrolase 1 (187 aa).

Residues Cys76, His79, and Cys148 each coordinate Zn(2+).

Belongs to the GTP cyclohydrolase I family. Homomer.

The enzyme catalyses GTP + H2O = 7,8-dihydroneopterin 3'-triphosphate + formate + H(+). Its pathway is cofactor biosynthesis; 7,8-dihydroneopterin triphosphate biosynthesis; 7,8-dihydroneopterin triphosphate from GTP: step 1/1. This is GTP cyclohydrolase 1 from Streptococcus gordonii (strain Challis / ATCC 35105 / BCRC 15272 / CH1 / DL1 / V288).